Consider the following 282-residue polypeptide: Peptidoglycan-recognition protein LD (282 aa).

The segment at 1 to 29 is disordered; it reads MDSSHIAVRVARRSPSPAAVSQSSYGSLG. Over 1 to 88 the chain is Cytoplasmic; it reads MDSSHIAVRV…RRNPTLHEDC (88 aa). A helical membrane pass occupies residues 89-111; sequence FNWRSVGLLVMCASALALAAYLL. The Extracellular segment spans residues 112–282; sequence WRQTQTPDFG…PHYASHQTSK (171 aa). C162 and C166 are disulfide-bonded. An N-linked (GlcNAc...) asparagine glycan is attached at N222.

The protein belongs to the N-acetylmuramoyl-L-alanine amidase 2 family. Expressed in uninduced hemocytes and mbn-2 cells.

The protein localises to the cell membrane. Functionally, peptidoglycan-recognition protein probably involved in innate immunity by binding to peptidoglycans (PGN) of bacteria and activating the immune response. This chain is Peptidoglycan-recognition protein LD (PGRP-LD), found in Drosophila melanogaster (Fruit fly).